The chain runs to 302 residues: Sulfate adenylyltransferase subunit 2 (302 aa).

It belongs to the PAPS reductase family. CysD subfamily. In terms of assembly, heterodimer composed of CysD, the smaller subunit, and CysN.

The enzyme catalyses sulfate + ATP + H(+) = adenosine 5'-phosphosulfate + diphosphate. The protein operates within sulfur metabolism; hydrogen sulfide biosynthesis; sulfite from sulfate: step 1/3. With CysN forms the ATP sulfurylase (ATPS) that catalyzes the adenylation of sulfate producing adenosine 5'-phosphosulfate (APS) and diphosphate, the first enzymatic step in sulfur assimilation pathway. APS synthesis involves the formation of a high-energy phosphoric-sulfuric acid anhydride bond driven by GTP hydrolysis by CysN coupled to ATP hydrolysis by CysD. This Xanthomonas oryzae pv. oryzae (strain MAFF 311018) protein is Sulfate adenylyltransferase subunit 2.